Consider the following 648-residue polypeptide: Macrolide export ATP-binding/permease protein MacB (648 aa).

Over 1 to 272 the chain is Cytoplasmic; the sequence is MTPLLELKDI…RALAANKMRT (272 aa). The region spanning 5–243 is the ABC transporter domain; it reads LELKDIRRSY…TGGTEPVVNT (239 aa). 41–48 serves as a coordination point for ATP; sequence GASGSGKS. A helical membrane pass occupies residues 273-293; that stretch reads LLTMLGIIIGIASVVSIVVVG. The Periplasmic segment spans residues 294-522; that stretch reads DAAKQMVLAD…TVEKTTRTLQ (229 aa). The helical transmembrane segment at 523–543 threads the bilayer; that stretch reads LFLTLVAVISLVVGGIGVMNI. At 544–575 the chain is on the cytoplasmic side; it reads MLVSVTERTREIGIRMAVGARASDVLQQFLIE. Residues 576–596 traverse the membrane as a helical segment; that stretch reads AVLVCLVGGALGITLSLLIAF. Residues 597-610 are Periplasmic-facing; it reads TLQLFLPGWEIGFS. A helical membrane pass occupies residues 611 to 631; that stretch reads PLALLLAFLCSTVTGILFGWL. At 632-648 the chain is on the cytoplasmic side; that stretch reads PARNAARLDPVDALARE.

The protein belongs to the ABC transporter superfamily. Macrolide exporter (TC 3.A.1.122) family. Homodimer. Part of the tripartite efflux system MacAB-TolC, which is composed of an inner membrane transporter, MacB, a periplasmic membrane fusion protein, MacA, and an outer membrane component, TolC. The complex forms a large protein conduit and can translocate molecules across both the inner and outer membranes. Interacts with MacA.

Its subcellular location is the cell inner membrane. With respect to regulation, ATPase activity is stimulated by interaction with MacA and inhibited by vanadate. In terms of biological role, part of the tripartite efflux system MacAB-TolC. MacB is a non-canonical ABC transporter that contains transmembrane domains (TMD), which form a pore in the inner membrane, and an ATP-binding domain (NBD), which is responsible for energy generation. When overexpressed, the system confers resistance against macrolides composed of 14- and 15-membered lactones but no or weak resistance against 16-membered ones. In addition, the system could also transport R-LPS or a similar glycolipid. In Escherichia coli (strain K12), this protein is Macrolide export ATP-binding/permease protein MacB.